Reading from the N-terminus, the 318-residue chain is Porphobilinogen deaminase (318 aa).

The residue at position 241 (C241) is an S-(dipyrrolylmethanemethyl)cysteine.

It belongs to the HMBS family. As to quaternary structure, monomer. It depends on dipyrromethane as a cofactor.

It catalyses the reaction 4 porphobilinogen + H2O = hydroxymethylbilane + 4 NH4(+). It participates in porphyrin-containing compound metabolism; protoporphyrin-IX biosynthesis; coproporphyrinogen-III from 5-aminolevulinate: step 2/4. Its function is as follows. Tetrapolymerization of the monopyrrole PBG into the hydroxymethylbilane pre-uroporphyrinogen in several discrete steps. The chain is Porphobilinogen deaminase from Citrifermentans bemidjiense (strain ATCC BAA-1014 / DSM 16622 / JCM 12645 / Bem) (Geobacter bemidjiensis).